We begin with the raw amino-acid sequence, 602 residues long: Elongation factor 4 (602 aa).

The tr-type G domain maps to 7 to 189 (SKIRNFCIIA…AIVRRVPAPQ (183 aa)). GTP contacts are provided by residues 19 to 24 (DHGKST) and 136 to 139 (NKVD).

It belongs to the TRAFAC class translation factor GTPase superfamily. Classic translation factor GTPase family. LepA subfamily.

Its subcellular location is the cell inner membrane. The enzyme catalyses GTP + H2O = GDP + phosphate + H(+). Its function is as follows. Required for accurate and efficient protein synthesis under certain stress conditions. May act as a fidelity factor of the translation reaction, by catalyzing a one-codon backward translocation of tRNAs on improperly translocated ribosomes. Back-translocation proceeds from a post-translocation (POST) complex to a pre-translocation (PRE) complex, thus giving elongation factor G a second chance to translocate the tRNAs correctly. Binds to ribosomes in a GTP-dependent manner. The sequence is that of Elongation factor 4 from Prochlorococcus marinus (strain MIT 9312).